We begin with the raw amino-acid sequence, 245 residues long: Octanoyltransferase (245 aa).

Residues 54–242 (KTAHEQVWLL…AFEKIFGPTI (189 aa)) enclose the BPL/LPL catalytic domain. Substrate is bound by residues 93–100 (RGGEFTYH), 173–175 (AIG), and 186–188 (GVS). Catalysis depends on C204, which acts as the Acyl-thioester intermediate.

This sequence belongs to the LipB family.

The protein resides in the cytoplasm. The enzyme catalyses octanoyl-[ACP] + L-lysyl-[protein] = N(6)-octanoyl-L-lysyl-[protein] + holo-[ACP] + H(+). It functions in the pathway protein modification; protein lipoylation via endogenous pathway; protein N(6)-(lipoyl)lysine from octanoyl-[acyl-carrier-protein]: step 1/2. Catalyzes the transfer of endogenously produced octanoic acid from octanoyl-acyl-carrier-protein onto the lipoyl domains of lipoate-dependent enzymes. Lipoyl-ACP can also act as a substrate although octanoyl-ACP is likely to be the physiological substrate. The chain is Octanoyltransferase from Bartonella tribocorum (strain CIP 105476 / IBS 506).